The following is a 506-amino-acid chain: Methylthioalkylmalate synthase 2, chloroplastic (506 aa).

The transit peptide at 1–49 directs the protein to the chloroplast; that stretch reads MASSLLTSSGMIPTTGSTVVGRSVLPFQSSLHSLRLTHSYKNPALFISC. A Pyruvate carboxyltransferase domain is found at 85–359; that stretch reads VRVFDTTLRD…YTRIDTRQIM (275 aa).

It belongs to the alpha-IPM synthase/homocitrate synthase family.

Its subcellular location is the plastid. The protein resides in the chloroplast. The enzyme catalyses an omega-(methylsulfanyl)-2-oxoalkanoate + acetyl-CoA + H2O = a 2-(omega-methylsulfanyl)alkylmalate + CoA + H(+). In terms of biological role, catalyzes only the first methionine chain elongation cycle. The chain is Methylthioalkylmalate synthase 2, chloroplastic (MAM2) from Arabidopsis thaliana (Mouse-ear cress).